The chain runs to 140 residues: MTNIDVISDMLTRIRNSLLIKARKVNVINTKLTVNIAEILKKEGFIDSFELADATCLTENGVIKKYITIFLKYKGPKQVSYITKIKRVSKPGLRTYSSYKRLQSVAGGVGLTVLSTSKGLMTDRLARSNKIGGEILFYIW.

The protein belongs to the universal ribosomal protein uS8 family. As to quaternary structure, part of the 30S ribosomal subunit.

It is found in the plastid. It localises to the chloroplast. One of the primary rRNA binding proteins, it binds directly to 16S rRNA central domain where it helps coordinate assembly of the platform of the 30S subunit. The chain is Small ribosomal subunit protein uS8c (rps8) from Euglena gracilis.